The chain runs to 95 residues: Aspartyl/glutamyl-tRNA(Asn/Gln) amidotransferase subunit C (95 aa).

This sequence belongs to the GatC family. In terms of assembly, heterotrimer of A, B and C subunits.

The enzyme catalyses L-glutamyl-tRNA(Gln) + L-glutamine + ATP + H2O = L-glutaminyl-tRNA(Gln) + L-glutamate + ADP + phosphate + H(+). It catalyses the reaction L-aspartyl-tRNA(Asn) + L-glutamine + ATP + H2O = L-asparaginyl-tRNA(Asn) + L-glutamate + ADP + phosphate + 2 H(+). Functionally, allows the formation of correctly charged Asn-tRNA(Asn) or Gln-tRNA(Gln) through the transamidation of misacylated Asp-tRNA(Asn) or Glu-tRNA(Gln) in organisms which lack either or both of asparaginyl-tRNA or glutaminyl-tRNA synthetases. The reaction takes place in the presence of glutamine and ATP through an activated phospho-Asp-tRNA(Asn) or phospho-Glu-tRNA(Gln). The sequence is that of Aspartyl/glutamyl-tRNA(Asn/Gln) amidotransferase subunit C from Azotobacter vinelandii (strain DJ / ATCC BAA-1303).